A 292-amino-acid chain; its full sequence is Glutamate racemase (292 aa).

Substrate is bound by residues 28–29 and 60–61; these read DS and YG. Residue Cys-91 is the Proton donor/acceptor of the active site. 92–93 is a binding site for substrate; the sequence is NT. Catalysis depends on Cys-200, which acts as the Proton donor/acceptor. 201–202 contacts substrate; it reads TH.

The protein belongs to the aspartate/glutamate racemases family.

It catalyses the reaction L-glutamate = D-glutamate. It functions in the pathway cell wall biogenesis; peptidoglycan biosynthesis. Provides the (R)-glutamate required for cell wall biosynthesis. In Trichormus variabilis (strain ATCC 29413 / PCC 7937) (Anabaena variabilis), this protein is Glutamate racemase.